Consider the following 355-residue polypeptide: Beta-1,2-mannobiose phosphorylase (355 aa).

Beta-D-Manp-(1-&gt;2)-beta-D-Manp-(1-&gt;2)-D-Manp contacts are provided by residues N31, R46, R89, 140–141 (ED), K188, Y273, and D333.

This sequence belongs to the glycosyl hydrolase 130 family. As to quaternary structure, homodimer.

It catalyses the reaction beta-D-mannopyranosyl-(1-&gt;2)-D-mannopyranose + phosphate = alpha-D-mannose 1-phosphate + D-mannose. Its function is as follows. Catalyzes the reversible phosphorolysis of 1,2-beta-oligomannan. In phosphorolytic reactions, prefers beta-1,2-mannobiose (beta-1,2-Man2) as substrate, but can also use beta-1,2-mannotriose. The protein is Beta-1,2-mannobiose phosphorylase of Listeria innocua serovar 6a (strain ATCC BAA-680 / CLIP 11262).